A 142-amino-acid polypeptide reads, in one-letter code: Large ribosomal subunit protein uL13 (142 aa).

It belongs to the universal ribosomal protein uL13 family. Part of the 50S ribosomal subunit.

This protein is one of the early assembly proteins of the 50S ribosomal subunit, although it is not seen to bind rRNA by itself. It is important during the early stages of 50S assembly. This is Large ribosomal subunit protein uL13 from Stenotrophomonas maltophilia (strain R551-3).